The following is a 428-amino-acid chain: tRNA modification GTPase MnmE (428 aa).

Residues Arg-20, Glu-77, and Lys-117 each coordinate (6S)-5-formyl-5,6,7,8-tetrahydrofolate. In terms of domain architecture, TrmE-type G spans 213 to 351 (GFEVAIIGPP…LVQRISDVLK (139 aa)). Residue Asn-223 participates in K(+) binding. Residues 223-228 (NAGKST), 242-248 (SEVAGTT), and 267-270 (DTAG) contribute to the GTP site. Position 227 (Ser-227) interacts with Mg(2+). Positions 242, 244, and 247 each coordinate K(+). Thr-248 serves as a coordination point for Mg(2+). Residue Lys-428 participates in (6S)-5-formyl-5,6,7,8-tetrahydrofolate binding.

This sequence belongs to the TRAFAC class TrmE-Era-EngA-EngB-Septin-like GTPase superfamily. TrmE GTPase family. Homodimer. Heterotetramer of two MnmE and two MnmG subunits. The cofactor is K(+).

The protein localises to the cytoplasm. Exhibits a very high intrinsic GTPase hydrolysis rate. Involved in the addition of a carboxymethylaminomethyl (cmnm) group at the wobble position (U34) of certain tRNAs, forming tRNA-cmnm(5)s(2)U34. The sequence is that of tRNA modification GTPase MnmE from Ruegeria pomeroyi (strain ATCC 700808 / DSM 15171 / DSS-3) (Silicibacter pomeroyi).